Consider the following 297-residue polypeptide: Ubiquinone biosynthesis protein COQ4, mitochondrial (297 aa).

The N-terminal 54 residues, Met1–Glu54, are a transit peptide targeting the mitochondrion. Residues His178, Asp179, His182, and Glu194 each contribute to the Zn(2+) site.

It belongs to the COQ4 family. Component of a multi-subunit COQ enzyme complex, composed of at least COQ3, COQ4, COQ5, COQ6, COQ7 and COQ9. Requires Zn(2+) as cofactor.

It is found in the mitochondrion inner membrane. It carries out the reaction a 4-hydroxy-3-methoxy-5-(all-trans-polyprenyl)benzoate + H(+) = a 2-methoxy-6-(all-trans-polyprenyl)phenol + CO2. Its pathway is cofactor biosynthesis; ubiquinone biosynthesis. Its function is as follows. Lyase that catalyzes the C1-decarboxylation of 4-hydroxy-3-methoxy-5-(all-trans-polyprenyl)benzoic acid into 2-methoxy-6-(all-trans-polyprenyl)phenol during ubiquinone biosynthesis. This Laccaria bicolor (strain S238N-H82 / ATCC MYA-4686) (Bicoloured deceiver) protein is Ubiquinone biosynthesis protein COQ4, mitochondrial.